The sequence spans 148 residues: 3-dehydroquinate dehydratase (148 aa).

Catalysis depends on Y23, which acts as the Proton acceptor. N75, H81, and D88 together coordinate substrate. H101 serves as the catalytic Proton donor. Substrate is bound by residues L102–S103 and R112.

This sequence belongs to the type-II 3-dehydroquinase family. Homododecamer.

The catalysed reaction is 3-dehydroquinate = 3-dehydroshikimate + H2O. It participates in metabolic intermediate biosynthesis; chorismate biosynthesis; chorismate from D-erythrose 4-phosphate and phosphoenolpyruvate: step 3/7. Its function is as follows. Catalyzes a trans-dehydration via an enolate intermediate. In Xanthomonas oryzae pv. oryzae (strain MAFF 311018), this protein is 3-dehydroquinate dehydratase.